A 375-amino-acid polypeptide reads, in one-letter code: uncharacterized protein (375 aa).

An Isoglutamyl lysine isopeptide (Lys-Gln) (interchain with Q-Cter in protein Pup) cross-link involves residue K99.

Belongs to the IMPDH/GMPR family.

This is an uncharacterized protein from Mycolicibacterium smegmatis (strain ATCC 700084 / mc(2)155) (Mycobacterium smegmatis).